Here is a 193-residue protein sequence, read N- to C-terminus: uncharacterized protein (193 aa).

A run of 4 helical transmembrane segments spans residues 40–56 (LYIASLAGFIFGLLKLI), 63–79 (AAGLFVFPIKGIISSLC), 86–110 (CSGYMLATFLSLFSLALIIVGIVSC), and 117–138 (FIFPIISIGMALATTETCFQIY). Positions 158–193 (TTTKLSRSSSAPDLSCPSLSTQPTSPNQSLSAYKKY) are disordered.

This sequence belongs to the chlamydial CPn_0442/CT_006/TC_0274 family.

It is found in the cell membrane. This is an uncharacterized protein from Chlamydia muridarum (strain MoPn / Nigg).